The following is a 152-amino-acid chain: Large ribosomal subunit protein bL9 (152 aa).

Belongs to the bacterial ribosomal protein bL9 family.

Its function is as follows. Binds to the 23S rRNA. The polypeptide is Large ribosomal subunit protein bL9 (Pelagibacter ubique (strain HTCC1062)).